The chain runs to 300 residues: Peroxisomal 2,4-dienoyl-CoA reductase [(3E)-enoyl-CoA-producing] (300 aa).

Residues 42 to 47 (GGGSGI), 67 to 71 (RNLEK), and Asp-93 each bind NADP(+). Arg-67 contacts substrate. Residues Arg-95, Phe-125, and 133–135 (SFN) contribute to the substrate site. Residues Lys-189 and 215 to 221 (PGPISGT) each bind NADP(+). Arg-226 contributes to the substrate binding site. The Microbody targeting signal motif lies at 298-300 (AKL).

It belongs to the short-chain dehydrogenases/reductases (SDR) family. 2,4-dienoyl-CoA reductase subfamily. Monomer, dimer and oligomer.

It is found in the peroxisome. The catalysed reaction is a (2E,4Z)-dienoyl-CoA + NADPH + H(+) = a 4,5-saturated-(3E)-enoyl-CoA + NADP(+). It carries out the reaction a (2E,4E)-dienoyl-CoA + NADPH + H(+) = a 4,5-saturated-(3E)-enoyl-CoA + NADP(+). The enzyme catalyses (2E,4E)-hexadienoyl-CoA + NADPH + H(+) = (3E)-hexenoyl-CoA + NADP(+). It catalyses the reaction (2E,4E)-decadienoyl-CoA + NADPH + H(+) = (3E)-decenoyl-CoA + NADP(+). The catalysed reaction is (2E,4Z,7Z,10Z,13Z,16Z,19Z)-docosaheptaenoyl-CoA + NADPH + H(+) = (3E,7Z,10Z,13Z,16Z,19Z)-docosahexaenoyl-CoA + NADP(+). Auxiliary enzyme of beta-oxidation. Participates in the degradation of unsaturated fatty enoyl-CoA esters having double bonds in both even- and odd-numbered positions in peroxisome. Catalyzes the NADP-dependent reduction of 2,4-dienoyl-CoA to yield trans-3-enoyl-CoA. The polypeptide is Peroxisomal 2,4-dienoyl-CoA reductase [(3E)-enoyl-CoA-producing] (decr2) (Danio rerio (Zebrafish)).